Here is a 179-residue protein sequence, read N- to C-terminus: MAKLHDTYRQTVVQELMNQFGYNSVMQVPRIEKITLNMGVGEALADKKVLENAAGDLAAISGQKPLITKARKSVAGFKIREGYPIGCKVTLRGERMWEFLERLICISMPRIRDFRGVSAKSFDGRGNYSMGVREQIIFPEIDYDKVDKVRGLDITITTTAKTDEEGRALLAAFSFPFRK.

Belongs to the universal ribosomal protein uL5 family. In terms of assembly, part of the 50S ribosomal subunit; part of the 5S rRNA/L5/L18/L25 subcomplex. Contacts the 5S rRNA and the P site tRNA. Forms a bridge to the 30S subunit in the 70S ribosome.

Its function is as follows. This is one of the proteins that bind and probably mediate the attachment of the 5S RNA into the large ribosomal subunit, where it forms part of the central protuberance. In the 70S ribosome it contacts protein S13 of the 30S subunit (bridge B1b), connecting the 2 subunits; this bridge is implicated in subunit movement. Contacts the P site tRNA; the 5S rRNA and some of its associated proteins might help stabilize positioning of ribosome-bound tRNAs. In Tolumonas auensis (strain DSM 9187 / NBRC 110442 / TA 4), this protein is Large ribosomal subunit protein uL5.